The sequence spans 302 residues: Ribosomal RNA small subunit methyltransferase A (302 aa).

Residues Asn-27, Leu-29, Gly-54, Glu-75, Asp-100, and Asn-138 each contribute to the S-adenosyl-L-methionine site.

Belongs to the class I-like SAM-binding methyltransferase superfamily. rRNA adenine N(6)-methyltransferase family. RsmA subfamily.

The protein resides in the cytoplasm. It carries out the reaction adenosine(1518)/adenosine(1519) in 16S rRNA + 4 S-adenosyl-L-methionine = N(6)-dimethyladenosine(1518)/N(6)-dimethyladenosine(1519) in 16S rRNA + 4 S-adenosyl-L-homocysteine + 4 H(+). Its function is as follows. Specifically dimethylates two adjacent adenosines (A1518 and A1519) in the loop of a conserved hairpin near the 3'-end of 16S rRNA in the 30S particle. May play a critical role in biogenesis of 30S subunits. This Natranaerobius thermophilus (strain ATCC BAA-1301 / DSM 18059 / JW/NM-WN-LF) protein is Ribosomal RNA small subunit methyltransferase A.